The following is a 542-amino-acid chain: Peptide chain release factor 3 (542 aa).

The tr-type G domain occupies 14–283 (ERRRNFAIIS…AFLDYALKPA (270 aa)). GTP is bound by residues 23 to 30 (SHPDAGKT), 91 to 95 (DTPGH), and 145 to 148 (NKLD).

Belongs to the TRAFAC class translation factor GTPase superfamily. Classic translation factor GTPase family. PrfC subfamily.

The protein localises to the cytoplasm. Increases the formation of ribosomal termination complexes and stimulates activities of RF-1 and RF-2. It binds guanine nucleotides and has strong preference for UGA stop codons. It may interact directly with the ribosome. The stimulation of RF-1 and RF-2 is significantly reduced by GTP and GDP, but not by GMP. This is Peptide chain release factor 3 from Cyanothece sp. (strain PCC 7425 / ATCC 29141).